Consider the following 488-residue polypeptide: Probable malate:quinone oxidoreductase (488 aa).

The protein belongs to the MQO family. FAD is required as a cofactor.

The catalysed reaction is (S)-malate + a quinone = a quinol + oxaloacetate. Its pathway is carbohydrate metabolism; tricarboxylic acid cycle; oxaloacetate from (S)-malate (quinone route): step 1/1. In Neisseria meningitidis serogroup C (strain 053442), this protein is Probable malate:quinone oxidoreductase.